We begin with the raw amino-acid sequence, 285 residues long: Secreted LysM effector slp2 (285 aa).

An N-terminal signal peptide occupies residues 1–16 (MLPITVVTLFAALAAA). Residues 75–143 (GDAAKAGDAA…KGGDAAKGGN (69 aa)) form a disordered region. A compositionally biased stretch (basic and acidic residues) spans 85 to 116 (KGGDAKGGDAKGGDAKGGDAKGGKGGDAKGGK). Residues 117–139 (GGDAAKGGKGGDAAKGGKGGDAA) are compositionally biased toward gly residues. LysM domains are found at residues 157-201 (VEHK…VLKI) and 237-281 (FTRV…TINL).

This sequence belongs to the secreted LysM effector family.

In terms of biological role, might have a role in sequestration of chitin oligosaccharides (breakdown products of fungal cell walls that are released during invasion and act as triggers of host immunity) to dampen host defense. The sequence is that of Secreted LysM effector slp2 from Pyricularia oryzae (strain 70-15 / ATCC MYA-4617 / FGSC 8958) (Rice blast fungus).